We begin with the raw amino-acid sequence, 221 residues long: Probable septum site-determining protein MinC (221 aa).

It belongs to the MinC family. In terms of assembly, interacts with MinD and FtsZ.

Cell division inhibitor that blocks the formation of polar Z ring septums. Rapidly oscillates between the poles of the cell to destabilize FtsZ filaments that have formed before they mature into polar Z rings. Prevents FtsZ polymerization. The protein is Probable septum site-determining protein MinC of Shewanella halifaxensis (strain HAW-EB4).